A 259-amino-acid chain; its full sequence is Hemin import ATP-binding protein HmuV (259 aa).

Residues 8 to 242 (ISANNISYRI…KMIENVYGHK (235 aa)) form the ABC transporter domain. Residue 40–47 (GPNGAGKS) coordinates ATP.

Belongs to the ABC transporter superfamily. Heme (hemin) importer (TC 3.A.1.14.5) family. In terms of assembly, the complex is composed of two ATP-binding proteins (HmuV), two transmembrane proteins (HmuU) and a solute-binding protein (HmuT).

It is found in the cell inner membrane. In terms of biological role, part of the ABC transporter complex HmuTUV involved in hemin import. Responsible for energy coupling to the transport system. This is Hemin import ATP-binding protein HmuV from Aliivibrio fischeri (strain ATCC 700601 / ES114) (Vibrio fischeri).